Reading from the N-terminus, the 406-residue chain is Multifunctional CCA protein (406 aa).

Residues glycine 8 and arginine 11 each coordinate ATP. Positions 8 and 11 each coordinate CTP. Mg(2+) is bound by residues aspartate 21 and aspartate 23. Positions 91, 138, and 141 each coordinate ATP. CTP is bound by residues arginine 91, arginine 138, and arginine 141. Positions 229-331 (TGIHQEMVSD…LELLGRCDAL (103 aa)) constitute an HD domain.

The protein belongs to the tRNA nucleotidyltransferase/poly(A) polymerase family. Bacterial CCA-adding enzyme type 1 subfamily. In terms of assembly, monomer. Can also form homodimers and oligomers. Mg(2+) is required as a cofactor. Requires Ni(2+) as cofactor.

It carries out the reaction a tRNA precursor + 2 CTP + ATP = a tRNA with a 3' CCA end + 3 diphosphate. The enzyme catalyses a tRNA with a 3' CCA end + 2 CTP + ATP = a tRNA with a 3' CCACCA end + 3 diphosphate. Its function is as follows. Catalyzes the addition and repair of the essential 3'-terminal CCA sequence in tRNAs without using a nucleic acid template. Adds these three nucleotides in the order of C, C, and A to the tRNA nucleotide-73, using CTP and ATP as substrates and producing inorganic pyrophosphate. tRNA 3'-terminal CCA addition is required both for tRNA processing and repair. Also involved in tRNA surveillance by mediating tandem CCA addition to generate a CCACCA at the 3' terminus of unstable tRNAs. While stable tRNAs receive only 3'-terminal CCA, unstable tRNAs are marked with CCACCA and rapidly degraded. The protein is Multifunctional CCA protein of Stenotrophomonas maltophilia (strain R551-3).